Here is a 481-residue protein sequence, read N- to C-terminus: Methylenetetrahydrofolate--tRNA-(uracil-5-)-methyltransferase TrmFO (481 aa).

13 to 18 (GGGLAG) provides a ligand contact to FAD.

This sequence belongs to the MnmG family. TrmFO subfamily. It depends on FAD as a cofactor.

The protein localises to the cytoplasm. The enzyme catalyses uridine(54) in tRNA + (6R)-5,10-methylene-5,6,7,8-tetrahydrofolate + NADH + H(+) = 5-methyluridine(54) in tRNA + (6S)-5,6,7,8-tetrahydrofolate + NAD(+). It carries out the reaction uridine(54) in tRNA + (6R)-5,10-methylene-5,6,7,8-tetrahydrofolate + NADPH + H(+) = 5-methyluridine(54) in tRNA + (6S)-5,6,7,8-tetrahydrofolate + NADP(+). Functionally, catalyzes the folate-dependent formation of 5-methyl-uridine at position 54 (M-5-U54) in all tRNAs. This is Methylenetetrahydrofolate--tRNA-(uracil-5-)-methyltransferase TrmFO from Agrobacterium fabrum (strain C58 / ATCC 33970) (Agrobacterium tumefaciens (strain C58)).